Consider the following 92-residue polypeptide: Acylphosphatase (92 aa).

In terms of domain architecture, Acylphosphatase-like spans 5 to 92 (CIAAYVYGVV…ADFQGFSIRY (88 aa)). Catalysis depends on residues Arg20 and Asn38.

Belongs to the acylphosphatase family.

The catalysed reaction is an acyl phosphate + H2O = a carboxylate + phosphate + H(+). The sequence is that of Acylphosphatase (acyP) from Serratia proteamaculans (strain 568).